Consider the following 387-residue polypeptide: tRNA pseudouridine synthase B (387 aa).

The active-site Nucleophile is Asp43.

It belongs to the pseudouridine synthase TruB family. Type 1 subfamily.

The enzyme catalyses uridine(55) in tRNA = pseudouridine(55) in tRNA. In terms of biological role, responsible for synthesis of pseudouridine from uracil-55 in the psi GC loop of transfer RNAs. The sequence is that of tRNA pseudouridine synthase B from Bifidobacterium longum (strain NCC 2705).